The sequence spans 200 residues: Small ribosomal subunit protein uS5 (200 aa).

The segment covering 1 to 12 has biased composition (polar residues); the sequence is MGRPRTSQTRGQ. A disordered region spans residues 1 to 49; sequence MGRPRTSQTRGQGPSGATGGNPRGGGSTTRERDARGARPGERDGGSEIQ. A compositionally biased stretch (gly residues) spans 13 to 27; sequence GPSGATGGNPRGGGS. The segment covering 29-49 has biased composition (basic and acidic residues); it reads TRERDARGARPGERDGGSEIQ. One can recognise an S5 DRBM domain in the interval 48 to 111; that stretch reads IQDRVVQIRR…EKARHAMFDV (64 aa).

It belongs to the universal ribosomal protein uS5 family. In terms of assembly, part of the 30S ribosomal subunit. Contacts proteins S4 and S8.

With S4 and S12 plays an important role in translational accuracy. Its function is as follows. Located at the back of the 30S subunit body where it stabilizes the conformation of the head with respect to the body. The protein is Small ribosomal subunit protein uS5 of Rubrobacter xylanophilus (strain DSM 9941 / JCM 11954 / NBRC 16129 / PRD-1).